We begin with the raw amino-acid sequence, 524 residues long: Solute carrier family 35 member F5 (524 aa).

The segment at 1–22 (MVPPRHHPGAGRPGALSSSPPF) is disordered. Over residues 13–22 (PGALSSSPPF) the composition is skewed to low complexity. Helical transmembrane passes span 69 to 89 (MALGIVILLLVDVIWVASSEL) and 101 to 121 (FFSTFAKTSMFVLYLLGFIVW). The residue at position 207 (Ser-207) is a Phosphoserine. The next 8 membrane-spanning stretches (helical) occupy residues 244–264 (ISFFFCFVWFLANFSYQEALS), 269–289 (AIVNILSSTSGLFTLILAAMF), 297–317 (FTLSKLLAVILSIGGVVLVNL), 328–348 (TIGSIWSLVGAMLYAVYIVMI), 362–382 (MFFGFVGLFNLLLLWPGFFLL), 396–416 (VVLMCIVINGLIGTVLSEFLW), 421–441 (FLTSSLIGTLALSLTIPLSII), and 453–473 (WLFFAGAIPVFFSFFIATLLC). The 65-residue stretch at 253–317 (FLANFSYQEA…SIGGVVLVNL (65 aa)) folds into the EamA domain.

The protein belongs to the SLC35F solute transporter family.

Its subcellular location is the membrane. Putative solute transporter. In Bos taurus (Bovine), this protein is Solute carrier family 35 member F5 (SLC35F5).